The primary structure comprises 644 residues: Arginine--tRNA ligase (644 aa).

The short motif at 134–144 (VNPTKPLHMGH) is the 'HIGH' region element.

The protein belongs to the class-I aminoacyl-tRNA synthetase family.

The protein resides in the cytoplasm. The catalysed reaction is tRNA(Arg) + L-arginine + ATP = L-arginyl-tRNA(Arg) + AMP + diphosphate. The sequence is that of Arginine--tRNA ligase from Thermococcus sibiricus (strain DSM 12597 / MM 739).